The following is a 295-amino-acid chain: Ribosomal RNA small subunit methyltransferase A (295 aa).

Residues Asn-31, Leu-33, Gly-58, Glu-79, Asp-104, and Asn-129 each coordinate S-adenosyl-L-methionine.

Belongs to the class I-like SAM-binding methyltransferase superfamily. rRNA adenine N(6)-methyltransferase family. RsmA subfamily.

It is found in the cytoplasm. The enzyme catalyses adenosine(1518)/adenosine(1519) in 16S rRNA + 4 S-adenosyl-L-methionine = N(6)-dimethyladenosine(1518)/N(6)-dimethyladenosine(1519) in 16S rRNA + 4 S-adenosyl-L-homocysteine + 4 H(+). Specifically dimethylates two adjacent adenosines (A1518 and A1519) in the loop of a conserved hairpin near the 3'-end of 16S rRNA in the 30S particle. May play a critical role in biogenesis of 30S subunits. This Enterococcus faecalis (strain ATCC 700802 / V583) protein is Ribosomal RNA small subunit methyltransferase A.